We begin with the raw amino-acid sequence, 309 residues long: Tagatose-6-phosphate kinase (309 aa).

This sequence belongs to the carbohydrate kinase PfkB family. LacC subfamily.

The catalysed reaction is D-tagatofuranose 6-phosphate + ATP = D-tagatofuranose 1,6-bisphosphate + ADP + H(+). It functions in the pathway carbohydrate metabolism; D-tagatose 6-phosphate degradation; D-glyceraldehyde 3-phosphate and glycerone phosphate from D-tagatose 6-phosphate: step 1/2. This is Tagatose-6-phosphate kinase from Streptococcus pyogenes serotype M12 (strain MGAS2096).